The sequence spans 415 residues: F-box protein ETP1 (415 aa).

The F-box domain maps to 1 to 46 (MTIPDLCNDLVDEILCRVPARNLKRLRSTSKRWNRLFKDDRRFARE).

Interacts with EIN2 (via C-terminus).

Negative regulator of EIN2 protein stability. In Arabidopsis thaliana (Mouse-ear cress), this protein is F-box protein ETP1.